Here is a 148-residue protein sequence, read N- to C-terminus: MKIKIHNKTNISIKYLTKILKKIFFFVPERQNIHIIFITPLKMKKMNFYYRQKDYDTDVLSFINEIDKDSLGDIFINLKKAQKQSQNYNHSLSREVCFLATHGYLHLKGYEHHSKDELKKMLIIQEKMLKKVDLDKKIISKNKKNNND.

Zn(2+)-binding residues include His-102, His-106, and His-112.

The protein belongs to the endoribonuclease YbeY family. Requires Zn(2+) as cofactor.

The protein localises to the cytoplasm. Its function is as follows. Single strand-specific metallo-endoribonuclease involved in late-stage 70S ribosome quality control and in maturation of the 3' terminus of the 16S rRNA. This is Endoribonuclease YbeY from Phytoplasma mali (strain AT).